The chain runs to 194 residues: Peptidyl-tRNA hydrolase (194 aa).

Tyrosine 17 provides a ligand contact to tRNA. The Proton acceptor role is filled by histidine 22. Tyrosine 68, asparagine 70, and asparagine 115 together coordinate tRNA.

Belongs to the PTH family. In terms of assembly, monomer.

It is found in the cytoplasm. The catalysed reaction is an N-acyl-L-alpha-aminoacyl-tRNA + H2O = an N-acyl-L-amino acid + a tRNA + H(+). Functionally, hydrolyzes ribosome-free peptidyl-tRNAs (with 1 or more amino acids incorporated), which drop off the ribosome during protein synthesis, or as a result of ribosome stalling. Its function is as follows. Catalyzes the release of premature peptidyl moieties from peptidyl-tRNA molecules trapped in stalled 50S ribosomal subunits, and thus maintains levels of free tRNAs and 50S ribosomes. In Pseudoalteromonas atlantica (strain T6c / ATCC BAA-1087), this protein is Peptidyl-tRNA hydrolase.